We begin with the raw amino-acid sequence, 88 residues long: Small ribosomal subunit protein bS16c (88 aa).

It belongs to the bacterial ribosomal protein bS16 family.

It is found in the plastid. The protein resides in the chloroplast. The protein is Small ribosomal subunit protein bS16c of Solanum bulbocastanum (Wild potato).